Consider the following 66-residue polypeptide: Large ribosomal subunit protein bL31 (66 aa).

Zn(2+) contacts are provided by Cys16, Cys18, Cys36, and Cys39.

Belongs to the bacterial ribosomal protein bL31 family. Type A subfamily. As to quaternary structure, part of the 50S ribosomal subunit. Requires Zn(2+) as cofactor.

Its function is as follows. Binds the 23S rRNA. This is Large ribosomal subunit protein bL31 from Desulforamulus reducens (strain ATCC BAA-1160 / DSM 100696 / MI-1) (Desulfotomaculum reducens).